The sequence spans 397 residues: F-box protein At4g11590 (397 aa).

Residues 24 to 70 (EKNFNDVPLDVAIEIFMRLPVKSVARFLLLSKFWAEIIRSRHFITSF) form the F-box domain.

In terms of assembly, part of a SCF (ASK-cullin-F-box) protein ligase complex. Interacts with ASK16.

Its subcellular location is the nucleus. Its pathway is protein modification; protein ubiquitination. In terms of biological role, component of SCF(ASK-cullin-F-box) E3 ubiquitin ligase complexes, which may mediate the ubiquitination and subsequent proteasomal degradation of target proteins. This Arabidopsis thaliana (Mouse-ear cress) protein is F-box protein At4g11590.